The following is a 457-amino-acid chain: 5' exonuclease Apollo (457 aa).

The TBM motif lies at 425–437 (ELPKQYLLTPLNA).

The protein belongs to the DNA repair metallo-beta-lactamase (DRMBL) family. Interacts with TERF2; the interaction is direct.

It is found in the chromosome. The protein resides in the telomere. The protein localises to the nucleus. It carries out the reaction a beta-lactam + H2O = a substituted beta-amino acid. Functionally, 5'-3' exonuclease that plays a central role in telomere maintenance and protection during S-phase. Participates in the protection of telomeres against non-homologous end-joining (NHEJ)-mediated repair, thereby ensuring that telomeres do not fuse. Plays a key role in telomeric loop (T loop) formation by being recruited by TERF2 at the leading end telomeres and by processing leading-end telomeres immediately after their replication via its exonuclease activity: generates 3' single-stranded overhang at the leading end telomeres avoiding blunt leading-end telomeres that are vulnerable to end-joining reactions and expose the telomere end in a manner that activates the DNA repair pathways. May be required for DNA interstrand cross-link repair. Possesses beta-lactamase activity, catalyzing the hydrolysis of penicillin G and nitrocefin. Exhibits no activity towards other beta-lactam antibiotic classes including cephalosporins (cefotaxime) and carbapenems (imipenem). This Gallus gallus (Chicken) protein is 5' exonuclease Apollo (DCLRE1B).